The sequence spans 152 residues: MRLIAVGRMKDRVERDLFQRYAERLSPRLDLVEVAEGRGAPAEIKRREGQALLSALPDRAFAVALDEGGRAHDSLAFARVLERWLGLSRPVCFLVGGAEGLDGPVLARADDTLSLGPMTWPHMLIRGLLAEQLYRARAIASGHPYHRAGRPA.

Residues Leu65, Gly96, and 115–120 (LGPMTW) each bind S-adenosyl-L-methionine.

The protein belongs to the RNA methyltransferase RlmH family. In terms of assembly, homodimer.

It is found in the cytoplasm. It carries out the reaction pseudouridine(1915) in 23S rRNA + S-adenosyl-L-methionine = N(3)-methylpseudouridine(1915) in 23S rRNA + S-adenosyl-L-homocysteine + H(+). In terms of biological role, specifically methylates the pseudouridine at position 1915 (m3Psi1915) in 23S rRNA. In Gluconacetobacter diazotrophicus (strain ATCC 49037 / DSM 5601 / CCUG 37298 / CIP 103539 / LMG 7603 / PAl5), this protein is Ribosomal RNA large subunit methyltransferase H.